The sequence spans 571 residues: Carboxylesterase 3B (571 aa).

The signal sequence occupies residues 1-31 (MTNMRTMIPAGSSVLVWVTCLLLAFVTTVTG). Residues Cys100 and Cys127 are joined by a disulfide bond. Ser232 acts as the Acyl-ester intermediate in catalysis. A disulfide bridge connects residues Cys284 and Cys295. N-linked (GlcNAc...) asparagine glycosylation occurs at Asn311. Residues Glu347 and His460 each act as charge relay system in the active site. Positions 568–571 (PEEL) match the Prevents secretion from ER motif.

This sequence belongs to the type-B carboxylesterase/lipase family.

It is found in the endoplasmic reticulum lumen. It carries out the reaction a carboxylic ester + H2O = an alcohol + a carboxylate + H(+). In terms of biological role, involved in the detoxification of xenobiotics and in the activation of ester and amide prodrugs. This chain is Carboxylesterase 3B (Ces3b), found in Mus musculus (Mouse).